A 444-amino-acid chain; its full sequence is MVKFRFAPSPTGHLHAGNARLAVVNALAARAMGGTLLLRIDDTDRERSKPEYEAGIEQDLRWLGIGWDEMARQSDRMDRYAAAAERLKAAGLLYPCFESEEELAAKRALRAKRHLPPVYDRAMLSLTAEQRAAAEAGGKRPYFRFKLSDGAVAWNDLVLGRREVALGTVSDPVLIRADGTPLYTFTSVVDDLELGVTHVVRGEDHVTNTAVQIDLMRALEPRRAVPAFGHLPLISDVTGEKLSKRAGSVSVRQFRRDGIEAMALVSYLARLGSRRDPEPLTLEELAGTFDLGDFSRGAPRFDPKQLLALNRRVLHGLPFEAVAERLPEGCGAEFWMAVRGNLDLLSEARLWWEVVSGEIETPSLPEAASLLRAALEALPPEPWDETTWKGWTGAVAAASGARGKALYLPLRLALTGESHGPELAALLPLIGRARAAARLERAAG.

The 'HIGH' region signature appears at 8 to 18 (PSPTGHLHAGN). The 'KMSKS' region motif lies at 241-245 (KLSKR). Lys-244 lines the ATP pocket.

Belongs to the class-I aminoacyl-tRNA synthetase family. Glutamate--tRNA ligase type 1 subfamily. Monomer.

It localises to the cytoplasm. The enzyme catalyses tRNA(Glu) + L-glutamate + ATP = L-glutamyl-tRNA(Glu) + AMP + diphosphate. Catalyzes the attachment of glutamate to tRNA(Glu) in a two-step reaction: glutamate is first activated by ATP to form Glu-AMP and then transferred to the acceptor end of tRNA(Glu). In Acidiphilium cryptum (strain JF-5), this protein is Glutamate--tRNA ligase 2.